Here is a 540-residue protein sequence, read N- to C-terminus: Protein SOSEKI 3 (540 aa).

The interval 32-123 (KKVQIVYYLS…YVLKGSELFD (92 aa)) is DIX-like oligomerization domain. 2 disordered regions span residues 147–201 (EPPS…DAKN) and 219–294 (ADAS…SSLG). 2 stretches are compositionally biased toward low complexity: residues 150–163 (SSRS…SSSM) and 185–194 (RSVSSSGVSP). A compositionally biased stretch (polar residues) spans 221–244 (ASTQTDETVSGRSKTPIETFSRGV). Positions 246 to 256 (TDEDVSSEPET) are enriched in acidic residues. A compositionally biased stretch (low complexity) spans 280 to 292 (NSVSPPFSNSASS). The Association to cell membranes signature appears at 342-343 (CG). The disordered stretch occupies residues 412 to 492 (KKDAADSNAS…KNIPCTTKTH (81 aa)). The span at 418 to 437 (SNASLKRSSSYNGDRASNQM) shows a compositional bias: polar residues. Over residues 471–482 (SEKRRDSSEDTT) the composition is skewed to basic and acidic residues.

It belongs to the SOSEKI family. As to quaternary structure, homodimer. Forms long polymer filaments with other SOKs proteins polymers (e.g. SOK1, SOK2, SOK3 and SOK4) crucial for polar localization and biological activity. Binds to ANGUSTIFOLIA (AN). Expressed during embryogenesis and in roots.

The protein resides in the cell membrane. In terms of biological role, SOSEKI proteins (SOK1-5) locally interpret global polarity cues and can influence cell division orientation to coordinate cell polarization relative to body axes, probably by guiding ANGUSTIFOLIA (AN) polarized localization. The chain is Protein SOSEKI 3 from Arabidopsis thaliana (Mouse-ear cress).